Reading from the N-terminus, the 679-residue chain is Glycine--tRNA ligase beta subunit (679 aa).

Belongs to the class-II aminoacyl-tRNA synthetase family. Tetramer of two alpha and two beta subunits.

The protein resides in the cytoplasm. The catalysed reaction is tRNA(Gly) + glycine + ATP = glycyl-tRNA(Gly) + AMP + diphosphate. The polypeptide is Glycine--tRNA ligase beta subunit (Streptococcus pyogenes serotype M18 (strain MGAS8232)).